The primary structure comprises 223 residues: Ras-related protein Rab-21 (223 aa).

Ala-2 is modified (N-acetylalanine). Positions 26, 29, 30, 31, 32, 43, 44, 46, 48, and 49 each coordinate GTP. Thr-31 is a binding site for Mg(2+). The Switch 1 motif lies at 41–54 (KFNDKHITTLQASF). The Mg(2+) site is built by Thr-49 and Asp-72. Positions 74-92 (AGQERFHALGPIYYRDSNG) match the Switch 2 motif. GTP is bound by residues Gly-75, Asn-130, Lys-131, Asp-133, Ala-161, and Lys-162. 2 S-geranylgeranyl cysteine lipidation sites follow: Cys-219 and Cys-220. A Cysteine methyl ester modification is found at Cys-220. Positions 221–223 (SSG) are cleaved as a propeptide — removed in mature form.

It belongs to the small GTPase superfamily. Rab family. In terms of assembly, interacts with the cytoplasmic tail of integrins ITGA1, ITGA2, ITGA5, ITGA6, ITGA11 and ITGB1; this interaction is dependent upon its GDP/GTP cycle. Interacts with RABGEF1 (via VPS9 domain). Interacts with ANKRD27. Interacts (in GTP-bound form) with VAMP8 in response to starvation; the interaction probably regulates VAMP8 endolysosomal trafficking. Interacts (active GTP-bound form) with TMED10; the interaction is indirect and regulates TMED10 abundance and localization at the Golgi. The cofactor is Mg(2+).

The protein resides in the endoplasmic reticulum membrane. The protein localises to the golgi apparatus. It localises to the trans-Golgi network. It is found in the golgi apparatus membrane. Its subcellular location is the early endosome membrane. The protein resides in the cytoplasmic vesicle membrane. The protein localises to the cleavage furrow. It localises to the cell projection. It is found in the neuron projection. It carries out the reaction GTP + H2O = GDP + phosphate + H(+). Regulated by guanine nucleotide exchange factors (GEFs) including ANKRD27 and RABGEF1, which promote the exchange of bound GDP for free GTP. Regulated by GTPase activating proteins (GAPs) which increase the GTP hydrolysis activity. Inhibited by GDP dissociation inhibitors (GDIs). In terms of biological role, the small GTPases Rab are key regulators of intracellular membrane trafficking, from the formation of transport vesicles to their fusion with membranes. Rabs cycle between an inactive GDP-bound form and an active GTP-bound form that is able to recruit to membranes different sets of downstream effectors directly responsible for vesicle formation, movement, tethering and fusion. RAB21 is involved in membrane trafficking control. Regulates integrin internalization and recycling, but does not influence the traffic of endosomally translocated receptors in general. As a result, may regulate cell adhesion and migration. During the mitosis of adherent cells, controls the endosomal trafficking of integrins which is required for the successful completion of cytokinesis. Involved in neurite growth. Following SBF2/MTMT13-mediated activation in response to starvation-induced autophagy, binds to and regulates SNARE protein VAMP8 endolysosomal transport required for SNARE-mediated autophagosome-lysosome fusion. Modulates protein levels of the cargo receptors TMED2 and TMED10, and required for appropriate Golgi localization of TMED10. The chain is Ras-related protein Rab-21 from Rattus norvegicus (Rat).